A 58-amino-acid chain; its full sequence is Small ribosomal subunit protein bS21 (58 aa).

Residues 25–58 (KAGTLQEARKREHYEKPSVKRKRKSEAARKRKKI) form a disordered region. The segment covering 31–42 (EARKREHYEKPS) has biased composition (basic and acidic residues). Positions 43–58 (VKRKRKSEAARKRKKI) are enriched in basic residues.

It belongs to the bacterial ribosomal protein bS21 family.

The chain is Small ribosomal subunit protein bS21 from Streptococcus thermophilus (strain ATCC BAA-491 / LMD-9).